A 309-amino-acid chain; its full sequence is Taste receptor type 2 member 105 (309 aa).

Over 1–9 the chain is Extracellular; that stretch reads MLSAAEGIL. Residues 10-32 form a helical membrane-spanning segment; sequence LSIATVEAGLGVLGNTFIALVNC. The Cytoplasmic portion of the chain corresponds to 33–44; that stretch reads MDWAKNKKLSKI. The chain crosses the membrane as a helical span at residues 45 to 67; sequence GFLLFGLATSRIFIVWILILDAY. At 68 to 86 the chain is on the extracellular side; sequence AKLFFPGKYLSKSLTEIIS. The chain crosses the membrane as a helical span at residues 87–109; sequence CIWMTVNHMTVWFATSLSIFYFL. Topologically, residues 110 to 129 are cytoplasmic; that stretch reads KIANFSHYIFLWLKRRTDKV. The chain crosses the membrane as a helical span at residues 130–149; it reads FAFLLWCLLISWAISFSFTV. Residues 150–177 lie on the Extracellular side of the membrane; it reads KVMKSNPKNHGNRTSGTHWEKREFTSNY. Asn-161 carries N-linked (GlcNAc...) asparagine glycosylation. Residues 178-200 form a helical membrane-spanning segment; the sequence is VLINIGVISLLIMTLTACFLLII. The Cytoplasmic portion of the chain corresponds to 201 to 226; that stretch reads SLWKHSRQMQSNVSGFRDLNTEAHVK. A helical membrane pass occupies residues 227-249; it reads AIKFLISFIILFILYFIGVAVEI. Residues 250 to 258 lie on the Extracellular side of the membrane; that stretch reads ICMFIPENK. The helical transmembrane segment at 259–281 threads the bilayer; it reads LLFIFGLTTASVYPCCHSVILIL. The Cytoplasmic portion of the chain corresponds to 282-309; that stretch reads TNSQLKQAFVKVLEGLKFSENGKDLRAT.

It belongs to the G-protein coupled receptor T2R family. Expressed in subsets of taste receptor cells of the tongue and palate epithelium and exclusively in gustducin-positive cells. Expressed in 15% taste bud cells in circumvallate and foliate papillae but only in 2% in fungiform papillae. Expressed in the duodenum, antrum and fundus (part of the stomach).

It localises to the membrane. Gustducin-coupled cycloheximide receptor implicated in the perception of bitter compounds in the oral cavity and the gastrointestinal tract. Signals through PLCB2 and the calcium-regulated cation channel TRPM5. This chain is Taste receptor type 2 member 105 (Tas2r105), found in Rattus norvegicus (Rat).